The chain runs to 213 residues: UPF0111 protein TM_0914 (213 aa).

The protein belongs to the UPF0111 family.

The polypeptide is UPF0111 protein TM_0914 (Thermotoga maritima (strain ATCC 43589 / DSM 3109 / JCM 10099 / NBRC 100826 / MSB8)).